The sequence spans 574 residues: E3 ubiquitin-protein ligase TRIM23 (574 aa).

The RING-type; degenerate zinc-finger motif lies at 31-76; sequence CGVCEDVFSLQGDKVPRLLLCGHTVCHDCLTRLPLHGRAIRCPFDR. The B box-type; degenerate zinc finger occupies 122 to 168; it reads ESIIRCDEDEAHVASVYCTVCATHLCSDCSQVTHSTKTLAKHRRVPL. Positions 352–379 form a coiled coil; the sequence is RVVLAKQEITRLLETLQKQQQQFTEVAD. The interval 390 to 574 is ARF-like; it reads TFTKDNRVHI…LVAAGVLDVA (185 aa). GTP contacts are provided by residues 411 to 418, 454 to 458, and 513 to 516; these read GLDGAGKT, DVGGK, and NKQD.

In the C-terminal section; belongs to the small GTPase superfamily. Arf family. In terms of assembly, homodimer. Interacts with PSCD1. Interacts with UBE2D2. Interacts with TBK1 (via N-terminal kinase domain) and p62/SQSTM1.

The protein resides in the cytoplasm. It is found in the endomembrane system. Its subcellular location is the golgi apparatus membrane. It localises to the lysosome membrane. The enzyme catalyses S-ubiquitinyl-[E2 ubiquitin-conjugating enzyme]-L-cysteine + [acceptor protein]-L-lysine = [E2 ubiquitin-conjugating enzyme]-L-cysteine + N(6)-ubiquitinyl-[acceptor protein]-L-lysine.. Its pathway is protein modification; protein ubiquitination. In terms of biological role, acts as an E3 ubiquitin-protein ligase. Plays an essential role in autophagy activation during viral infection. Mechanistically, activates TANK-binding kinase 1/TBK1 by facilitating its dimerization and ability to phosphorylate the selective autophagy receptor SQSTM1. In order to achieve this function, TRIM23 mediates 'Lys-27'-linked auto-ubiquitination of its ADP-ribosylation factor (ARF) domain to induce its GTPase activity and its recruitment to autophagosomes. The sequence is that of E3 ubiquitin-protein ligase TRIM23 (Trim23) from Mus musculus (Mouse).